The primary structure comprises 442 residues: Putative arsenical pump membrane protein (442 aa).

The next 11 membrane-spanning stretches (helical) occupy residues 22-42, 56-76, 85-105, 107-127, 136-156, 174-194, 250-270, 294-314, 328-347, 378-398, and 419-439; these read IPATFGALMVLLCGSVSLADL, ILATMIMAIALESFGFFYWVA, GSGIKLFWLTNLLCFLMTIFL, NDGSILITTPILLLVLKYLGL, LLSGVLIATASSAPIGVSNIV, MMFVPSMMGLIFMTCLLFMFF, LFAASYTGISVPLVAVIGSFI, IFIFAFTMYVLIYGLHNIGFT, SLAHATFASGISTSVFSNLF, IIGSDIGSLLLPMGTLATLIW, and IIIIPLTVLFTLTCLYFWISW.

Belongs to the ArsB family.

The protein localises to the cell membrane. The sequence is that of Putative arsenical pump membrane protein (ywrK) from Bacillus subtilis (strain 168).